A 357-amino-acid polypeptide reads, in one-letter code: Dehydrogenase FUB6 (357 aa).

This sequence belongs to the zinc-containing alcohol dehydrogenase family. Quinone oxidoreductase subfamily.

The protein operates within mycotoxin biosynthesis. Functionally, dehydrogenase; part of the gene cluster that mediates the biosynthesis of fusaric acid, a mycotoxin with low to moderate toxicity to animals and humans, but with high phytotoxic properties. L-aspartate is suggested as fusaric acid amino acid precursor that is activated and further processed to O-acetyl-L-homoserine by cluster enzymes aspartate kinase FUB3 and homoserine O-acetyltransferase FUB5, as well as enzymes of the primary metabolism. The polyketide synthase (PKS) FUB1 generates the triketide trans-2-hexenal which is presumptively released by the hydrolase FUB4 and linked to the NRPS-bound amino acid precursor by NAD(P)-dependent dehydrogenase FUB6. FUB1, FUB4, and the non-canonical NRPS Fub8 may form an enzyme complex. Further processing of the NRPS-bound intermediate might be carried out by FUB6 and the O-acetylhomoserine FUB7, enabling a spontaneous electrocyclization to close the carbon backbone of fusaric acid. Dihydrofusaric acid is likely to be released via reduction by the thioester reductase (TR) domain of FUB8 whereupon the final oxidation to fusaric acid may (also) be performed by the FMN-dependent dehydrogenase FUB9. The protein is Dehydrogenase FUB6 of Gibberella moniliformis (strain M3125 / FGSC 7600) (Maize ear and stalk rot fungus).